The sequence spans 92 residues: Small ribosomal subunit protein uS19 (92 aa).

Belongs to the universal ribosomal protein uS19 family.

Its function is as follows. Protein S19 forms a complex with S13 that binds strongly to the 16S ribosomal RNA. The sequence is that of Small ribosomal subunit protein uS19 from Rickettsia felis (strain ATCC VR-1525 / URRWXCal2) (Rickettsia azadi).